Reading from the N-terminus, the 103-residue chain is ESAT-6-like protein EsxF (103 aa).

This sequence belongs to the WXG100 family. CFP-10 subfamily.

The protein resides in the secreted. In Mycobacterium tuberculosis (strain CDC 1551 / Oshkosh), this protein is ESAT-6-like protein EsxF.